We begin with the raw amino-acid sequence, 95 residues long: Antitoxin VapB (95 aa).

Functionally, antitoxin component of a type II toxin-antitoxin (TA) system. Partially neutralizes the RNase activity of cognate toxin VapC. The protein is Antitoxin VapB of Rickettsia bellii (strain RML369-C).